Reading from the N-terminus, the 220-residue chain is CASP-like protein 1E1 (220 aa).

The Cytoplasmic portion of the chain corresponds to 1–57 (METPTPRVKPGFNGVGVGMGSSVNGSSRRAGYYMGPAGAVAVAGGGRAAAAAPVDGC). The chain crosses the membrane as a helical span at residues 58-78 (SVALRVFVLAATLVSAVVMGV). The Extracellular portion of the chain corresponds to 79 to 108 (DRQTSTIRITVTDALPPLEVPLTANWSYSS). The N-linked (GlcNAc...) asparagine glycan is linked to Asn103. A helical transmembrane segment spans residues 109–129 (AFVYFVVANAMVCLFSAAALA). Topologically, residues 130 to 144 (ACRSRAAMVPVMVGD) are cytoplasmic. Residues 145-165 (LLALALLYSAVGAAAEFGILG) traverse the membrane as a helical segment. Over 166 to 187 (ERGNSHVRWPKVCNVYGRFCER) the chain is Extracellular. Residues 188–208 (AMAAVIVSLIAAFANLVLLML) form a helical membrane-spanning segment. Over 209-220 (NILTIHKSSSYY) the chain is Cytoplasmic.

Belongs to the Casparian strip membrane proteins (CASP) family. In terms of assembly, homodimer and heterodimers.

It localises to the cell membrane. The sequence is that of CASP-like protein 1E1 from Zea mays (Maize).